The chain runs to 442 residues: Galactose/N-acetylgalactosamine-binding lectin CEL-III (442 aa).

Residues 1 to 10 (MVSLVPCGFA) constitute a propeptide, removed in mature form. Q11 is subject to Pyrrolidone carboxylic acid. A has hemagglutinating activity towards rabbit erythrocytes, but no hemolytic activity towards them region spans residues 11–304 (QVLCTNPLDI…DWEVPTATWN (294 aa)). 3 disulfides stabilise this stretch: C14-C59, C31-C48, and C72-C88. Residues D19 and 33–36 (DIVG) contribute to the D-galactose site. 2 Ricin B-type lectin domains span residues 28 to 102 (SKQC…RWRL) and 115 to 245 (EQVA…WSRP). Ca(2+)-binding residues include D33, I34, and G36. Mg(2+)-binding residues include N42 and I43. D-galactose is bound at residue D49. D53 lines the Ca(2+) pocket. The Mg(2+) site is built by N82 and V83. D-galactose-binding positions include V117 and 131–134 (DVEG). An intrachain disulfide couples C129 to C146. D131, V132, and G134 together coordinate Ca(2+). I141 provides a ligand contact to Mg(2+). 144 to 147 (YDCQ) serves as a coordination point for D-galactose. Ca(2+) contacts are provided by D151, D178, V179, and G181. C176 and C193 form a disulfide bridge. 178-181 (DVEG) contributes to the D-galactose binding site. 2 residues coordinate Mg(2+): N187 and V188. Position 191–194 (191–194 (YSCE)) interacts with D-galactose. Residues D198, D219, V220, and G222 each coordinate Ca(2+). A disulfide bridge links C217 with C234. 219–222 (DVEG) is a binding site for D-galactose. Positions 228 and 229 each coordinate Mg(2+). Residue 232–235 (YRCD) participates in D-galactose binding. D239 contacts Ca(2+). Disulfide bonds link C249–C254 and C264–C281. In terms of domain architecture, Ricin B-type lectin 3 spans 261-293 (SNKCLDVSGDQGTGDVGTWQCDGLPDQRFKWVF). Ca(2+)-binding residues include D266, V267, and G269. 266 to 269 (DVSG) lines the D-galactose pocket. The Mg(2+) site is built by D275 and V276. Residues 279-282 (WQCD) and D286 each bind D-galactose. Position 286 (D286) interacts with Ca(2+). The segment at 294–442 (DDWEVPTATW…NEDCTFCTDI (149 aa)) is has a strong tendency to self-associate leading to formation of oligomers. Disulfide bonds link C308-C390, C377-C416, C425-C439, and C431-C436.

In terms of assembly, oligomerizes in the human and rabbit erythrocyte membranes. Oligomerization is induced by binding of beta-1,4-linked disaccharide ligands such as lactose, lactulose, N-acetyllactosamine and phenyl-beta-D-galactoside, but only a little by N-acetylgalactosamine and galactose, and not at all by melibiose in aqueous solution in the presence of high salt concentration and pH 10. Forms heptamers that assemble into larger 21mer oligomers, which may be inserted as a transmembrane pore to the erythrocyte membrane. Ca(2+) serves as cofactor. It depends on Mg(2+) as a cofactor. As to expression, expressed in body fluid (at protein level).

The protein localises to the secreted. Its activity is regulated as follows. Ca(2+) is required for hemolytic activity and the activity increases with increasing calcium concentration. Hemolytic activity is inhibited by N-acetylgalactosamine (GalNAc), lactose, lactulose, galactosamine, dextran with molecular masses greater than 4 kDa, to a lesser extent by inulin and only slightly by sucrose and melezitose, but not by glucose or mannose. The activity is abolished in the presence of 10 mM EDTA. Lactose-binding increases with increasing calcium concentration, but calcium has no effect on hemagglutinating activity. Cytotoxic effect on Madin-Darby canine kidney (MDCK) cell line is strongly inhibited by galactose, lactose and N-acetylgalactosamine (GalNAc), but not by raffinose, N-acetylglucosamine (GlcNAc), glucose, mannose, ribose or sucrose. Pore formation in artificial lactosyl ceramide (LacCer) or globotetraosylceramide (Gb4Cer) containing liposomes is strongly inhibited by lactose. Functionally, galactose/N-acetylgalactosamine (Gal/GalNAc)-binding lectin with hemolytic activity. Favors saccharides that have a beta-1,4 linkage at the non-reducing end rather than saccharides having alpha-1,6 or alpha-1,4 linkages. Binds lactose, lactulose, GalNAc, galactosamine, methyl alpha-galactopyranoside, methyl beta-galactopyranoside, N-acetyllactosamine, p-nitrophenyl beta-D-galactopyranoside (pNP-Gal), p-nitrophenyl N-acetyl-beta-D-galactosaminide (pNP-GalNAc), asialofetuin, and human erythrocyte membrane lipids lactosyl ceramide (LacCer) and globoside globotetraosylceramide (Gb4Cer). Binds moderately to galactose, melibiose, raffinose, fucose, methyl alpha-galactoside and methyl beta-galactoside. Binds weakly to glucose, mannose and N-acetylglucosamine (GlcNAc). Has hemolytic activity towards human (A, B and O-type), rabbit and rat erythrocytes, but not towards mouse, chicken or horse erythrocytes. Forms ion-permeable transmembrane pores in the erythrocyte membrane as well as in artificial liposomes containing human erythrocyte membrane lipids LacCer, Gb4Cer and galactosyl ceramide (GalCer) leading to destruction of the membrane. Has hemagglutinating activity towards rabbit, human and rat erythrocytes, and at relatively high concentrations towards chicken and horse erythrocytes, but not towards mouse erythrocytes. Has dose-dependent cytotoxic effect on Madin-Darby canine kidney (MDCK), African green monkey kidney (Vero) and human epithelia carcinoma (HeLa) cell lines, but Chinese hamster ovary (CHO), rat sarcoma (XC) and potoroo rat kangaroo kidney (PtK1) cells are highly resistant to the cytotoxic effect of this protein. Impairs malaria parasite development in malaria parasite infected transgenic A.stephensi mosquitoes expressing this protein specifically in their midguts. Binds to ookinetes and leads to strong dose-dependent inhibition of ookinete formation in vitro. Leads to severely impaired oocyst formation and significantly reduced sporozoite production of rodent malaria parasite P.berghei in the salivary glands of the transgenic mosquitoes. The parasite transmission to uninfected mice (vectorial competence) of these mosquitoes is significantly impaired. Also leads to severely impaired oocyst formation of human malaria parasite P.falciparum in transgenic mosquitoes fed on mature P.falciparum gametocyte cultures. May be involved in defense mechanisms acting as a toxic protein to foreign microorganisms. May act in defense against predators. The chain is Galactose/N-acetylgalactosamine-binding lectin CEL-III from Pseudocnus echinatus (Sea cucumber).